A 743-amino-acid polypeptide reads, in one-letter code: ABC-type transporter claG (743 aa).

2 N-linked (GlcNAc...) asparagine glycosylation sites follow: Asn4 and Asn30. A helical membrane pass occupies residues 124 to 144 (SILLDIFLVIVVSWPFPFAWI). Asn159 carries N-linked (GlcNAc...) asparagine glycosylation. The ABC transporter domain maps to 200–439 (VEFSGISMRP…FQDAGYTFPL (240 aa)). 234-241 (GPSGSGKS) provides a ligand contact to ATP. The next 5 helical transmembrane spans lie at 507–527 (YPSF…IGLS), 560–580 (GMLL…KTFG), 611–631 (IFLS…PIVS), 636–656 (LIVN…ISAI), and 661–681 (NGPL…GCAP).

This sequence belongs to the ABC transporter superfamily. ABCG family.

It is found in the membrane. Functionally, ABC-type transporter; part of the cla gene cluster that produces clavatol and ortho-quinone methide. The clavatol biosynthesis cluster cla and the terrestric acid cluster tra are both involved in the production of peniphenones and penilactones. The sequence is that of ABC-type transporter claG from Penicillium crustosum (Blue mold fungus).